A 109-amino-acid chain; its full sequence is ATPase inhibitor mai-2, mitochondrial (109 aa).

Disordered stretches follow at residues 17 to 39 and 73 to 95; these read RFST…SIRD and QEVD…HQKR. A compositionally biased stretch (gly residues) spans 21-35; it reads GGHGDGAGRGGGSGG. Positions 45 to 109 form a coiled coil; the sequence is GKMEAAREDE…EAEERALGKE (65 aa).

The protein belongs to the ATPase inhibitor family.

It is found in the mitochondrion. Thought to be a regulatory component of the ATP-synthesizing complex in the mitochondria. In Caenorhabditis briggsae, this protein is ATPase inhibitor mai-2, mitochondrial.